The chain runs to 123 residues: Small ribosomal subunit protein uS12 (123 aa).

Positions 1–47 are disordered; that stretch reads MPTINQLVRKGRKKAEKKQSTPALKGGPQKRGVCTRVYTSTPKKPNS. Asp89 bears the 3-methylthioaspartic acid mark.

This sequence belongs to the universal ribosomal protein uS12 family. Part of the 30S ribosomal subunit. Contacts proteins S8 and S17. May interact with IF1 in the 30S initiation complex.

In terms of biological role, with S4 and S5 plays an important role in translational accuracy. Interacts with and stabilizes bases of the 16S rRNA that are involved in tRNA selection in the A site and with the mRNA backbone. Located at the interface of the 30S and 50S subunits, it traverses the body of the 30S subunit contacting proteins on the other side and probably holding the rRNA structure together. The combined cluster of proteins S8, S12 and S17 appears to hold together the shoulder and platform of the 30S subunit. In Desulforapulum autotrophicum (strain ATCC 43914 / DSM 3382 / VKM B-1955 / HRM2) (Desulfobacterium autotrophicum), this protein is Small ribosomal subunit protein uS12.